Here is a 406-residue protein sequence, read N- to C-terminus: Exo-alpha-sialidase (406 aa).

An N-terminal signal peptide occupies residues 1–20; the sequence is MQSMRFMILALLVQFLPAWA. Substrate contacts are provided by R59, R78, D84, and Q148. An N-linked (GlcNAc...) asparagine glycan is attached at N235. Substrate is bound by residues R265, R322, 322–323, 331–332, K337, Y358, D376, and 376–378; these read RR, YD, and DFF. N396 is a glycosylation site (N-linked (GlcNAc...) asparagine).

It belongs to the glycosyl hydrolase 33 family.

It catalyses the reaction Hydrolysis of alpha-(2-&gt;3)-, alpha-(2-&gt;6)-, alpha-(2-&gt;8)- glycosidic linkages of terminal sialic acid residues in oligosaccharides, glycoproteins, glycolipids, colominic acid and synthetic substrates.. In terms of biological role, sialidase is able to release sialic acid from a wide variety of natural substrates including bovine salivary mucin, colominic acid, bovine fetuin, a serum glycoprotein containing both alpha-2-6 and alpha-2-3-linkages in a ratio of about 3:2, and glycoproteins and glycolipids from thermally denatured human lung epithelial cells. Does not show any trans-sialidase activity since it is able to remove terminal sialic acid residues but is unable to catalyze their transfer to the acceptor substrate. 2-keto-3-deoxynononic acid (KDN) is the preferred substrate and A.fumigatus can utilize KDN as a sole carbon source. This Aspergillus fumigatus (strain ATCC MYA-4609 / CBS 101355 / FGSC A1100 / Af293) (Neosartorya fumigata) protein is Exo-alpha-sialidase.